A 168-amino-acid polypeptide reads, in one-letter code: uncharacterized protein (168 aa).

Residues Ile5–Gly24 form a helical membrane-spanning segment.

The protein resides in the membrane. This is an uncharacterized protein from Bacillus subtilis (strain 168).